The following is a 133-amino-acid chain: Lymphocyte antigen 6 complex locus protein G6d (133 aa).

The first 19 residues, 1-19, serve as a signal peptide directing secretion; sequence MKPQFVGILLSSLLGAALG. Residues 22 to 116 enclose the UPAR/Ly6 domain; it reads MRCYNCGGSP…ASHVAPAGIL (95 aa). C27 and C35 form a disulfide bridge. 2 O-linked (GalNAc...) threonine glycosylation sites follow: T40 and T41. Intrachain disulfides connect C42–C71 and C77–C96. Residue S104 is the site of GPI-anchor amidated serine attachment. A propeptide spans 105–133 (removed in mature form); it reads AVASHVAPAGILAAAATALTCLLPGLWSG.

As to quaternary structure, homodimer. O-glycosylated. As to expression, expressed in the adult lung, and in fetal liver, lung, kidney, brain and spleen.

The protein localises to the cell membrane. Its subcellular location is the cell projection. It is found in the filopodium. The sequence is that of Lymphocyte antigen 6 complex locus protein G6d (LY6G6D) from Homo sapiens (Human).